The chain runs to 78 residues: uncharacterized protein (78 aa).

The helical transmembrane segment at 13–33 (STILILLMSVLILLLSIDILA) threads the bilayer.

The protein localises to the membrane. This is an uncharacterized protein from Methanocaldococcus jannaschii (strain ATCC 43067 / DSM 2661 / JAL-1 / JCM 10045 / NBRC 100440) (Methanococcus jannaschii).